We begin with the raw amino-acid sequence, 218 residues long: Large ribosomal subunit protein uL3 (218 aa).

This sequence belongs to the universal ribosomal protein uL3 family. In terms of assembly, part of the 50S ribosomal subunit. Forms a cluster with proteins L14 and L19.

In terms of biological role, one of the primary rRNA binding proteins, it binds directly near the 3'-end of the 23S rRNA, where it nucleates assembly of the 50S subunit. The chain is Large ribosomal subunit protein uL3 from Corynebacterium urealyticum (strain ATCC 43042 / DSM 7109).